We begin with the raw amino-acid sequence, 231 residues long: Heptaprenylglyceryl phosphate synthase (231 aa).

Sn-glycerol 1-phosphate is bound at residue Lys12. The Mg(2+) site is built by Asp14 and Thr40. Sn-glycerol 1-phosphate is bound by residues 159-164 (YMEYSG), Gly189, and 209-210 (GN).

Belongs to the GGGP/HepGP synthase family. Group I subfamily. As to quaternary structure, homodimer. The cofactor is Mg(2+).

It carries out the reaction sn-glycerol 1-phosphate + all-trans-heptaprenyl diphosphate = 3-heptaprenyl-sn-glycero-1-phosphate + diphosphate. The protein operates within membrane lipid metabolism; glycerophospholipid metabolism. In terms of biological role, prenyltransferase that catalyzes in vivo the transfer of the heptaprenyl moiety of heptaprenyl pyrophosphate (HepPP; 35 carbon atoms) to the C3 hydroxyl of sn-glycerol-1-phosphate (G1P), producing heptaprenylglyceryl phosphate (HepGP). This reaction is an ether-bond-formation step in the biosynthesis of archaea-type G1P-based membrane lipids found in Bacillales. This Anoxybacillus flavithermus (strain DSM 21510 / WK1) protein is Heptaprenylglyceryl phosphate synthase.